A 1139-amino-acid chain; its full sequence is Protein lin-25 (1139 aa).

A Nuclear localization signal motif is present at residues 695 to 701 (IKKKKDP).

As to expression, expressed in seam cells and all six vulva precursor cells (VPC). After VPC division, expression is restricted to descendants of the VPC cell lineages P5.p, P6.p and P7.p (at protein level).

It localises to the nucleus. The protein localises to the cytoplasm. Functionally, participates in the inductive signaling pathway downstream of let-60 Ras and the RAF/MAP kinase cascade to regulate specification and differentiation of many cell types. Positively regulates the fate of vulval precursor cells. Required for induction of the P12 and excretory duct cell fates. In males, it is also required for proper formation of spicules. Does not function in the signaling pathway that promotes exit from pachytene. Plays a role in responses to M.nematophilum-mediated bacterial infection by promoting tail swelling and preventing constipation. The chain is Protein lin-25 (lin-25) from Caenorhabditis elegans.